The chain runs to 142 residues: Large ribosomal subunit protein uL23 (142 aa).

It belongs to the universal ribosomal protein uL23 family. Component of the large ribosomal subunit. Mature ribosomes consist of a small (40S) and a large (60S) subunit. The 40S subunit contains about 32 different proteins and 1 molecule of RNA (18S). The 60S subunit contains 45 different proteins and 3 molecules of RNA (25S, 5.8S and 5S).

Its subcellular location is the cytoplasm. Its function is as follows. Component of the ribosome, a large ribonucleoprotein complex responsible for the synthesis of proteins in the cell. The small ribosomal subunit (SSU) binds messenger RNAs (mRNAs) and translates the encoded message by selecting cognate aminoacyl-transfer RNA (tRNA) molecules. The large subunit (LSU) contains the ribosomal catalytic site termed the peptidyl transferase center (PTC), which catalyzes the formation of peptide bonds, thereby polymerizing the amino acids delivered by tRNAs into a polypeptide chain. The nascent polypeptides leave the ribosome through a tunnel in the LSU and interact with protein factors that function in enzymatic processing, targeting, and the membrane insertion of nascent chains at the exit of the ribosomal tunnel. RPL25 is a major component of the universal docking site for these factors at the polypeptide exit tunnel. In Candida albicans (strain SC5314 / ATCC MYA-2876) (Yeast), this protein is Large ribosomal subunit protein uL23.